A 196-amino-acid chain; its full sequence is ATP-dependent Clp protease proteolytic subunit (196 aa).

Ser-101 serves as the catalytic Nucleophile. The active site involves His-126.

The protein belongs to the peptidase S14 family. Component of the chloroplastic Clp protease core complex.

It is found in the plastid. It localises to the chloroplast stroma. It catalyses the reaction Hydrolysis of proteins to small peptides in the presence of ATP and magnesium. alpha-casein is the usual test substrate. In the absence of ATP, only oligopeptides shorter than five residues are hydrolyzed (such as succinyl-Leu-Tyr-|-NHMec, and Leu-Tyr-Leu-|-Tyr-Trp, in which cleavage of the -Tyr-|-Leu- and -Tyr-|-Trp bonds also occurs).. In terms of biological role, cleaves peptides in various proteins in a process that requires ATP hydrolysis. Has a chymotrypsin-like activity. Plays a major role in the degradation of misfolded proteins. The protein is ATP-dependent Clp protease proteolytic subunit of Panax ginseng (Korean ginseng).